The following is a 567-amino-acid chain: Low-affinity glucose transporter (567 aa).

Positions 1–24 (MSNQMTDSTSAGSGTEHSVDTNTA) are enriched in polar residues. Residues 1 to 36 (MSNQMTDSTSAGSGTEHSVDTNTALKAGSPNDLKVS) form a disordered region. Topologically, residues 18-62 (SVDTNTALKAGSPNDLKVSHEEDLNDLEKTAEETLQQKPAKEYIF) are cytoplasmic. Residues 63–83 (VSLCCVMVAFGGFVFGWDTGT) form a helical membrane-spanning segment. At 84-113 (ISGFVNQTDFLRRFGQEKADGSHYLSNVRT) the chain is on the extracellular side. N89 carries an N-linked (GlcNAc...) asparagine glycan. A helical membrane pass occupies residues 114–134 (GLIVSIFNIGCAVGGIVLSNI). Residues 135–141 (GDRWGRR) lie on the Cytoplasmic side of the membrane. A helical membrane pass occupies residues 142-162 (IGLITVIIIYVIGIIIQIASV). Residues 163–167 (DKWYQ) are Extracellular-facing. The helical transmembrane segment at 168–188 (YFIGRIISGLGVGGITVLSPM) threads the bilayer. At 189–199 (LISETAPKHLR) the chain is on the cytoplasmic side. The chain crosses the membrane as a helical span at residues 200-220 (GTLVSCYQLMITFGIFLGYCT). The Extracellular portion of the chain corresponds to 221–234 (NYGTKNYSNSVQWR). Residues 235-255 (VPLGLCFAWAIFMVLGMMFVP) traverse the membrane as a helical segment. Residues 256-334 (ESARFLVETD…MGIMIQSLQQ (79 aa)) lie on the Cytoplasmic side of the membrane. The helical transmembrane segment at 335-354 (LTGDNYFFYYGTTIFQSVGM) threads the bilayer. Over 355–358 (DDSF) the chain is Extracellular. Residues 359-379 (ETSIVLGIVNFASTFFALYTV) traverse the membrane as a helical segment. Topologically, residues 380-386 (DHFGRRN) are cytoplasmic. The chain crosses the membrane as a helical span at residues 387–407 (CLLYGCVGMVACYVVYASVGV). Residues 408-429 (TRLWPDGPDHPDISSKGAGNCM) lie on the Extracellular side of the membrane. The chain crosses the membrane as a helical span at residues 430 to 450 (IVFACFYIFCFATTWAPIAYV). Topologically, residues 451–466 (VISESYPLRVKGKAMA) are cytoplasmic. Residues 467 to 487 (IASASNWIWGFLIGFFTPFIT) traverse the membrane as a helical segment. Topologically, residues 488–493 (SAIHFY) are extracellular. A helical membrane pass occupies residues 494-514 (YGYVFMGCMVFAFFYVYFFVP). Topologically, residues 515–567 (ETKGLTLEEVNEMYSEGVLPWKSSSWVPSSRRGAEYDVDALQHDDKPWYKAML) are cytoplasmic.

It belongs to the major facilitator superfamily. Sugar transporter (TC 2.A.1.1) family.

The protein resides in the membrane. In terms of biological role, low-affinity glucose transporter. In Kluyveromyces lactis (strain ATCC 8585 / CBS 2359 / DSM 70799 / NBRC 1267 / NRRL Y-1140 / WM37) (Yeast), this protein is Low-affinity glucose transporter (RAG1).